The following is a 370-amino-acid chain: GDSL esterase/lipase At1g33811 (370 aa).

The first 24 residues, 1–24, serve as a signal peptide directing secretion; sequence MGILRFVLLISLNLVLFGFKTTVS. Ser-41 serves as the catalytic Nucleophile. 3 N-linked (GlcNAc...) asparagine glycosylation sites follow: Asn-203, Asn-241, and Asn-242. Residues Asp-336 and His-339 contribute to the active site.

It belongs to the 'GDSL' lipolytic enzyme family.

The protein resides in the secreted. This chain is GDSL esterase/lipase At1g33811, found in Arabidopsis thaliana (Mouse-ear cress).